A 317-amino-acid chain; its full sequence is 2,3-dihydroxyphenylpropionate/2,3-dihydroxicinnamic acid 1,2-dioxygenase (317 aa).

Residue H115 is the Proton donor of the active site. H179 acts as the Proton acceptor in catalysis.

The protein belongs to the LigB/MhpB extradiol dioxygenase family. Homotetramer. It depends on Fe(2+) as a cofactor.

The catalysed reaction is 3-(2,3-dihydroxyphenyl)propanoate + O2 = (2Z,4E)-2-hydroxy-6-oxonona-2,4-dienedioate + H(+). It carries out the reaction (2E)-3-(2,3-dihydroxyphenyl)prop-2-enoate + O2 = (2Z,4E,7E)-2-hydroxy-6-oxonona-2,4,7-trienedioate + H(+). It functions in the pathway aromatic compound metabolism; 3-phenylpropanoate degradation. In terms of biological role, catalyzes the non-heme iron(II)-dependent oxidative cleavage of 2,3-dihydroxyphenylpropionic acid and 2,3-dihydroxicinnamic acid into 2-hydroxy-6-ketononadienedioate and 2-hydroxy-6-ketononatrienedioate, respectively. This chain is 2,3-dihydroxyphenylpropionate/2,3-dihydroxicinnamic acid 1,2-dioxygenase, found in Paraburkholderia phymatum (strain DSM 17167 / CIP 108236 / LMG 21445 / STM815) (Burkholderia phymatum).